Reading from the N-terminus, the 732-residue chain is Formin-homology and zinc finger domains protein 1 (732 aa).

Composition is skewed to low complexity over residues 1–12, 19–45, 121–137, and 240–251; these read MMLASSAPTAPS, QPSAATTRADDCSSSTSPTNTSASDAS, QQQQQQNQNPSQSQSSS, and SSPKSPTSPTQP. An N-terminal signal peptide occupies residues 1–27; it reads MMLASSAPTAPSLLPPSSQPSAATTRA. Disordered regions lie at residues 1 to 45, 121 to 141, and 232 to 267; these read MMLA…SDAS, QQQQQQNQNPSQSQSSSSDRK, and RGRPMQGRSSPKSPTSPTQPGRRGSQASSLPSRRNT. Positions 256–267 are enriched in polar residues; sequence SQASSLPSRRNT. One can recognise an FH2 domain in the interval 355 to 732; the sequence is PISLSSSIIP…DDHHINVSSP (378 aa).

This sequence belongs to the formin homology family. In terms of tissue distribution, transiently expressed in all mesoderm derived progenitor body wall muscle cells before they differentiate.

Its function is as follows. Acts redundantly with hlh-1 to promote body wall muscle cell and coelomocyte specification in postembryonic mesoderm progenitors, probably through suppression of sem-2. This is Formin-homology and zinc finger domains protein 1 from Caenorhabditis elegans.